We begin with the raw amino-acid sequence, 509 residues long: Solute carrier family 2, facilitated glucose transporter member 4 (509 aa).

Residues 1 to 24 (MPSGFQQIGSEDGEPPQQRVTGTL) lie on the Cytoplasmic side of the membrane. Positions 7–13 (QIGSEDG) are interaction with SRFBP1. A Phosphoserine modification is found at Ser10. Residues 25–45 (VLAVFSAVLGSLQFGYNIGVI) traverse the membrane as a helical segment. The Extracellular portion of the chain corresponds to 46–81 (NAPQKVIEQSYNETWLGRQGPEGPSSIPPGTLTTLW). The N-linked (GlcNAc...) asparagine glycan is linked to Asn57. The chain crosses the membrane as a helical span at residues 82–102 (ALSVAIFSVGGMISSFLIGII). At 103-111 (SQWLGRKRA) the chain is on the cytoplasmic side. Residues 112-132 (MLVNNVLAVLGGSLMGLANAA) traverse the membrane as a helical segment. The Extracellular portion of the chain corresponds to 133–142 (ASYEMLILGR). Residues 143-163 (FLIGAYSGLTSGLVPMYVGEI) traverse the membrane as a helical segment. The Cytoplasmic segment spans residues 164–171 (APTHLRGA). A helical transmembrane segment spans residues 172–192 (LGTLNQLAIVIGILIAQVLGL). Gln177 is a binding site for D-glucose. Residues 193 to 201 (ESLLGTASL) lie on the Extracellular side of the membrane. The helical transmembrane segment at 202–222 (WPLLLGLTVLPALLQLVLLPF) threads the bilayer. Cys223 carries the S-palmitoyl cysteine lipid modification. Over 223–287 (CPESPRYLYI…LLGSRTHRQP (65 aa)) the chain is Cytoplasmic. Ser274 carries the post-translational modification Phosphoserine; by SGK1. The chain crosses the membrane as a helical span at residues 288–308 (LIIAVVLQLSQQLSGINAVFY). Residues 298 to 299 (QQ) and Asn304 each bind D-glucose. Topologically, residues 309-323 (YSTSIFETAGVGQPA) are extracellular. Residues 324–344 (YATIGAGVVNTVFTLVSVLLV) traverse the membrane as a helical segment. Asn333 contacts D-glucose. Topologically, residues 345-353 (ERAGRRTLH) are cytoplasmic. The chain crosses the membrane as a helical span at residues 354-374 (LLGLAGMCGCAILMTVALLLL). At 375 to 384 (ERVPAMSYVS) the chain is on the extracellular side. A helical transmembrane segment spans residues 385–405 (IVAIFGFVAFFEIGPGPIPWF). D-glucose contacts are provided by Glu396 and Trp404. At 406–417 (IVAELFSQGPRP) the chain is on the cytoplasmic side. A helical transmembrane segment spans residues 418-438 (AAMAVAGFSNWTSNFIIGMGF). At 439-445 (QYVAEAM) the chain is on the extracellular side. Residues 446-466 (GPYVFLLFAVLLLGFFIFTFL) traverse the membrane as a helical segment. The Cytoplasmic portion of the chain corresponds to 467 to 509 (RVPETRGRTFDQISAAFHRTPSLLEQEVKPSTELEYLGPDEND). Residue Thr486 is modified to Phosphothreonine. Phosphoserine is present on Ser488. The Dileucine internalization motif motif lies at 489-490 (LL).

It belongs to the major facilitator superfamily. Sugar transporter (TC 2.A.1.1) family. Glucose transporter subfamily. As to quaternary structure, interacts with NDUFA9. Binds to DAXX. Interacts via its N-terminus with SRFBP1. Interacts with TRARG1; the interaction is required for proper SLC2A4 recycling after insulin stimulation. In terms of processing, sumoylated. Post-translationally, palmitoylated. Palmitoylation by ZDHHC7 controls the insulin-dependent translocation of GLUT4 to the plasma membrane. In terms of tissue distribution, skeletal and cardiac muscles; brown and white fat.

The protein resides in the cell membrane. Its subcellular location is the endomembrane system. It localises to the cytoplasm. It is found in the perinuclear region. It catalyses the reaction D-glucose(out) = D-glucose(in). Insulin-regulated facilitative glucose transporter, which plays a key role in removal of glucose from circulation. Response to insulin is regulated by its intracellular localization: in the absence of insulin, it is efficiently retained intracellularly within storage compartments in muscle and fat cells. Upon insulin stimulation, translocates from these compartments to the cell surface where it transports glucose from the extracellular milieu into the cell. In Homo sapiens (Human), this protein is Solute carrier family 2, facilitated glucose transporter member 4.